A 216-amino-acid polypeptide reads, in one-letter code: Glycerol-3-phosphate acyltransferase (216 aa).

The next 5 membrane-spanning stretches (helical) occupy residues 4-24 (TIIG…LWIG), 71-91 (LPFF…LAVI), 113-133 (VVLG…ASIL), 144-164 (VLSA…GFIL), and 165-185 (PSYD…IILR).

It belongs to the PlsY family. As to quaternary structure, probably interacts with PlsX.

The protein localises to the cell membrane. It carries out the reaction an acyl phosphate + sn-glycerol 3-phosphate = a 1-acyl-sn-glycero-3-phosphate + phosphate. It participates in lipid metabolism; phospholipid metabolism. Functionally, catalyzes the transfer of an acyl group from acyl-phosphate (acyl-PO(4)) to glycerol-3-phosphate (G3P) to form lysophosphatidic acid (LPA). This enzyme utilizes acyl-phosphate as fatty acyl donor, but not acyl-CoA or acyl-ACP. The sequence is that of Glycerol-3-phosphate acyltransferase from Streptococcus sanguinis (strain SK36).